The following is a 519-amino-acid chain: MIPDVSRALSWLEAHPTILKGIRRGVERETLRITSDGSLAITEHPKTLGAALTHKWITTDFAESLLEFITPAGDDIKYTISFLSDIHRHTARVLDKEKMWPLSMPCFIDAEENITLAQYGASNVGRYKTLYREGLKNRYGALMQTISGVHYNFSLPIEFWRAWVGVEDAESGKEQISNGYFRLIRNYYRFGWVIPYLFGASPAICSSFLRGRETSFLFERTEDGTCYLPYATSLRMSNLGYTNKSQSDLNITFNNLHTYIDGLKKAIHKPSDEFAKLGTKQGDKHIQLNTNVLQIENELYAPIRPKRVTRGNESPSDALLRGGVEYIEVRSLDINPFAAIGVNETQIRFLDLFLIWCVLAEAPEMGSDELDCCRKNWNRVILEGRKPGQMIGLGCGSVEEPLAKVGKKLFSDLKRVAAILDSCSGTQYQKVCEELIATFDDSSLTLSARVLEKMKSQGIGGFGLELADEYHQQLISEKYEVISDEQFAIERRASVERQDALEREDTMSFDEYLKQQTGC.

The protein belongs to the glutamate--cysteine ligase type 1 family. Type 1 subfamily.

It catalyses the reaction L-cysteine + L-glutamate + ATP = gamma-L-glutamyl-L-cysteine + ADP + phosphate + H(+). The protein operates within sulfur metabolism; glutathione biosynthesis; glutathione from L-cysteine and L-glutamate: step 1/2. This is Glutamate--cysteine ligase from Photorhabdus laumondii subsp. laumondii (strain DSM 15139 / CIP 105565 / TT01) (Photorhabdus luminescens subsp. laumondii).